The following is a 320-amino-acid chain: Beta-sarcoglycan (320 aa).

Residues 1–10 show a composition bias toward low complexity; that stretch reads MAAAAAAAAA. The interval 1 to 34 is disordered; sequence MAAAAAAAAATEQQGSNGPVKKSMREKAVERRNV. At 1–67 the chain is on the cytoplasmic side; sequence MAAAAAAAAA…GLRGRKGNLA (67 aa). Residues 23 to 34 are compositionally biased toward basic and acidic residues; that stretch reads SMREKAVERRNV. The helical; Signal-anchor for type II membrane protein transmembrane segment at 68 to 88 threads the bilayer; it reads ICVIVLLFILAVINLLITLVI. The Extracellular portion of the chain corresponds to 89–320; that stretch reads WAVIRIGPNG…VSDNPCGNTH (232 aa). N-linked (GlcNAc...) asparagine glycosylation is found at asparagine 160, asparagine 213, and asparagine 260. 2 disulfide bridges follow: cysteine 290–cysteine 316 and cysteine 292–cysteine 309.

It belongs to the sarcoglycan beta/delta/gamma/zeta family. As to quaternary structure, cross-link to form 2 major subcomplexes: one consisting of SGCB, SGCD and SGCG and the other consisting of SGCB and SGCD. The association between SGCB and SGCG is particularly strong while SGCA is loosely associated with the other sarcoglycans. Post-translationally, disulfide bonds are present. As to expression, most strongly expressed in skeletal and heart muscle. Also detected in proliferating myoblasts.

Its subcellular location is the cell membrane. It localises to the sarcolemma. The protein resides in the cytoplasm. It is found in the cytoskeleton. Its function is as follows. Component of the sarcoglycan complex, a subcomplex of the dystrophin-glycoprotein complex which forms a link between the F-actin cytoskeleton and the extracellular matrix. The chain is Beta-sarcoglycan (Sgcb) from Mus musculus (Mouse).